Reading from the N-terminus, the 496-residue chain is MLSLRPYEFWFVTGSQHLYGEEALKQVEEHSRTIVNELNRDSVFPFPLVFKPIVTTPEEIRNICLEANASEQCAGVVTWMHTFSPAKMWIGGLLELRKPLLHLHTQFNRDIPWDSIDMDFMNLNQSAHGDREYGFIGARMGVARKVVVGHWEDPEVRERLAKWMRTAVAFAESRHLKVARFGDNMREVAVTEGDKVGAQIQFGWSINGYGIGDLVQSIRDVSEQSVNELLDEYAELYDIVPAGRQDGPVRESIREQARIELGLKAFLQDGNFTAFTTTFEDLHGMKQLPGLAVQRLMAEGYGFGGEGDWKTAALVRLMKVMADGKGTSFMEDYTYHFEPGNEMILGAHMLEVCPTIAATRPRIEVHPLSIGGKEDPARLVFDGGEGAAVNASLIDLGHRFRLIVNEVDAVKPEFDMLKLPVARILWKPRPSLRDSAEAWILAGGAHHTCFSFAVTAEQLEDFAEMTGIECVVINEHTSVSSFKNELRWNEVFWRGR.

Glu-306, Glu-331, His-348, and His-447 together coordinate Mn(2+).

This sequence belongs to the arabinose isomerase family. Mn(2+) serves as cofactor.

It carries out the reaction beta-L-arabinopyranose = L-ribulose. It participates in carbohydrate degradation; L-arabinose degradation via L-ribulose; D-xylulose 5-phosphate from L-arabinose (bacterial route): step 1/3. In terms of biological role, catalyzes the conversion of L-arabinose to L-ribulose. This chain is L-arabinose isomerase, found in Geobacillus thermodenitrificans (strain NG80-2).